Here is a 338-residue protein sequence, read N- to C-terminus: Limbic system-associated membrane protein (338 aa).

An N-terminal signal peptide occupies residues 1–28 (MVARAQPDRKQLPLVLLRLLCLLPTGLP). Ig-like C2-type domains are found at residues 29–122 (VRSV…PKTS), 132–214 (PKIS…VRVT), and 219–306 (PTIT…LYLY). N-linked (GlcNAc...) asparagine glycans are attached at residues asparagine 40, asparagine 66, asparagine 136, and asparagine 148. Cysteine 53 and cysteine 111 are joined by a disulfide. Intrachain disulfides connect cysteine 153–cysteine 197 and cysteine 239–cysteine 290. Residues asparagine 279, asparagine 287, asparagine 300, and asparagine 315 are each glycosylated (N-linked (GlcNAc...) asparagine). Asparagine 315 is lipidated: GPI-anchor amidated asparagine. A propeptide spans 316-338 (GSVSLAVPLWLLAASLLCLLSKC) (removed in mature form).

Belongs to the immunoglobulin superfamily. IgLON family.

Its subcellular location is the cell membrane. In terms of biological role, mediates selective neuronal growth and axon targeting. Probably serves as a recognition molecule for the formation of limbic connections. The polypeptide is Limbic system-associated membrane protein (Gallus gallus (Chicken)).